Reading from the N-terminus, the 165-residue chain is CDP-archaeol synthase (165 aa).

A run of 4 helical transmembrane segments spans residues 41–61 (GLIC…WLVG), 72–92 (ILSV…KSFI), 103–123 (AWPV…TIIF), and 127–147 (WFFA…TPVL).

Belongs to the CDP-archaeol synthase family. Requires Mg(2+) as cofactor.

It is found in the cell membrane. It carries out the reaction 2,3-bis-O-(geranylgeranyl)-sn-glycerol 1-phosphate + CTP + H(+) = CDP-2,3-bis-O-(geranylgeranyl)-sn-glycerol + diphosphate. The protein operates within membrane lipid metabolism; glycerophospholipid metabolism. In terms of biological role, catalyzes the formation of CDP-2,3-bis-(O-geranylgeranyl)-sn-glycerol (CDP-archaeol) from 2,3-bis-(O-geranylgeranyl)-sn-glycerol 1-phosphate (DGGGP) and CTP. This reaction is the third ether-bond-formation step in the biosynthesis of archaeal membrane lipids. This is CDP-archaeol synthase from Methanoregula boonei (strain DSM 21154 / JCM 14090 / 6A8).